The primary structure comprises 130 residues: Small ribosomal subunit protein uS8 (130 aa).

This sequence belongs to the universal ribosomal protein uS8 family. Part of the 30S ribosomal subunit. Contacts proteins S5 and S12.

Functionally, one of the primary rRNA binding proteins, it binds directly to 16S rRNA central domain where it helps coordinate assembly of the platform of the 30S subunit. In Shewanella halifaxensis (strain HAW-EB4), this protein is Small ribosomal subunit protein uS8.